The primary structure comprises 64 residues: Conotoxin VnMLCL-05 (64 aa).

The first 19 residues, 1–19 (MLCLPVFIILLLLASPAAP), serve as a signal peptide directing secretion. Residues 20–43 (NPLQTRIQSNLIRAGPEDANIKTD) constitute a propeptide that is removed on maturation. Residue K63 is modified to Lysine amide.

Belongs to the conotoxin T superfamily. Expressed by the venom duct.

It localises to the secreted. The chain is Conotoxin VnMLCL-05 from Conus ventricosus (Mediterranean cone).